A 332-amino-acid polypeptide reads, in one-letter code: MKVQILGMGHSLPERILNNQELEQMVDTSNEWIVERTGILERRIADKDTATSDLCWQAAKMALERSATEAKELDLIIVGTSSPDMLFPSTACIVQDHLGARNAAAFDVEAGCTGFIYALGIAEKFLLSPEYKKILVIGADLCSRFTDYTDRNTCVLFGDGAGAAVVGKGNLGPGILSSYLAADGSGGKHLYMPAGGSALPPSKETVEQRLHFIRMDGNEIFRFATKIVVAVSEKLLSQAGLSYQDVDLFIPHQANLRIIKTAMKRMRIPAEKTLINLDHFGNMSAACIPVGLSMAEEAGKLKKGDLVLMVAFGAGLSYGGILLRWGRDQDVF.

Catalysis depends on residues Cys-112 and His-252. An ACP-binding region spans residues 253-257; sequence QANLR. Residue Asn-282 is part of the active site.

This sequence belongs to the thiolase-like superfamily. FabH family. As to quaternary structure, homodimer.

The protein resides in the cytoplasm. The catalysed reaction is malonyl-[ACP] + acetyl-CoA + H(+) = 3-oxobutanoyl-[ACP] + CO2 + CoA. It functions in the pathway lipid metabolism; fatty acid biosynthesis. Its function is as follows. Catalyzes the condensation reaction of fatty acid synthesis by the addition to an acyl acceptor of two carbons from malonyl-ACP. Catalyzes the first condensation reaction which initiates fatty acid synthesis and may therefore play a role in governing the total rate of fatty acid production. Possesses both acetoacetyl-ACP synthase and acetyl transacylase activities. Its substrate specificity determines the biosynthesis of branched-chain and/or straight-chain of fatty acids. In Syntrophomonas wolfei subsp. wolfei (strain DSM 2245B / Goettingen), this protein is Beta-ketoacyl-[acyl-carrier-protein] synthase III.